We begin with the raw amino-acid sequence, 645 residues long: Matrix metalloproteinase-24 (645 aa).

A compositionally biased stretch (low complexity) spans 1 to 10; it reads MPRSRGGRAA. The tract at residues 1-26 is disordered; the sequence is MPRSRGGRAAPGPPPPPPPPGQAPRW. Residues 1 to 52 form the signal peptide; sequence MPRSRGGRAAPGPPPPPPPPGQAPRWSRWRVPGRLLLLLLPALCCLPGAARA. The segment covering 11–22 has biased composition (pro residues); that stretch reads PGPPPPPPPPGQ. Residues 53 to 155 constitute a propeptide that is removed on maturation; the sequence is AAAAAGAGNR…HLSRRRRNKR (103 aa). Residues 53–602 lie on the Extracellular side of the membrane; that stretch reads AAAAAGAGNR…INDVPGSVNA (550 aa). The short motif at 137-144 is the Cysteine switch element; the sequence is PRCGVPDH. Positions 139 and 282 each coordinate Zn(2+). The active site involves Glu283. Residues His286 and His292 each coordinate Zn(2+). The segment at 323–380 is disordered; the sequence is QKIYGPPAEPLEPTRPLPTLPVRRIHSPSERKHERQPRPPRPPLGDRPSTPGTKPNIC. Over residues 329–341 the composition is skewed to pro residues; the sequence is PAEPLEPTRPLPT. Positions 349–359 are enriched in basic and acidic residues; it reads SPSERKHERQP. 4 Hemopexin repeats span residues 377–425, 426–471, 473–521, and 522–569; these read PNIC…WKGL, PARI…GSCL, REGI…KGIP, and QAPQ…WMGC. A disulfide bridge links Cys380 with Cys569. Residues 603–623 form a helical membrane-spanning segment; it reads VAVVIPCILSLCILVLVYTIF. The Cytoplasmic portion of the chain corresponds to 624-645; it reads QFKNKTGPQPVTYYKRPVQEWV. Positions 643–645 match the PDZ-binding motif; it reads EWV.

Belongs to the peptidase M10A family. As to quaternary structure, interacts (via PDZ-binding motif) with APBA3 (via PDZ domain). Interacts with GRIP1 and GRIP2. Zn(2+) is required as a cofactor. The cofactor is Ca(2+). Cleaved by a furin endopeptidase in the trans-Golgi network. Predominantly expressed in brain, kidney, pancreas and lung. Overexpressed in a series of brain tumors, including astrocytomas and glioblastomas.

It localises to the cell membrane. Its subcellular location is the golgi apparatus. It is found in the trans-Golgi network membrane. The protein localises to the secreted. The protein resides in the extracellular space. It localises to the extracellular matrix. Functionally, metalloprotease that mediates cleavage of N-cadherin (CDH2) and acts as a regulator of neuro-immune interactions and neural stem cell quiescence. Involved in cell-cell interactions between nociceptive neurites and mast cells, possibly by mediating cleavage of CDH2, thereby acting as a mediator of peripheral thermal nociception and inflammatory hyperalgesia. Key regulator of neural stem cells quiescence by mediating cleavage of CDH2, affecting CDH2-mediated anchorage of neural stem cells to ependymocytes in the adult subependymal zone, leading to modulate their quiescence. May play a role in axonal growth. Able to activate progelatinase A. May also be a proteoglycanase involved in degradation of proteoglycans, such as dermatan sulfate and chondroitin sulfate proteoglycans. Cleaves partially fibronectin, but not collagen type I, nor laminin. This Homo sapiens (Human) protein is Matrix metalloproteinase-24 (MMP24).